Here is a 434-residue protein sequence, read N- to C-terminus: Glutamate-1-semialdehyde 2,1-aminomutase 1 (434 aa).

Position 270 is an N6-(pyridoxal phosphate)lysine (Lys270).

This sequence belongs to the class-III pyridoxal-phosphate-dependent aminotransferase family. HemL subfamily. As to quaternary structure, homodimer. The cofactor is pyridoxal 5'-phosphate.

It is found in the cytoplasm. It carries out the reaction (S)-4-amino-5-oxopentanoate = 5-aminolevulinate. Its pathway is porphyrin-containing compound metabolism; protoporphyrin-IX biosynthesis; 5-aminolevulinate from L-glutamyl-tRNA(Glu): step 2/2. This Bacillus anthracis (strain CDC 684 / NRRL 3495) protein is Glutamate-1-semialdehyde 2,1-aminomutase 1.